The chain runs to 89 residues: Large ribosomal subunit protein bL27 (89 aa).

A disordered region spans residues Met1–Gly22.

This sequence belongs to the bacterial ribosomal protein bL27 family.

The polypeptide is Large ribosomal subunit protein bL27 (Gluconacetobacter diazotrophicus (strain ATCC 49037 / DSM 5601 / CCUG 37298 / CIP 103539 / LMG 7603 / PAl5)).